A 372-amino-acid chain; its full sequence is Glutamate 5-kinase (372 aa).

Lys-14 provides a ligand contact to ATP. Substrate-binding residues include Ser-54, Asp-141, and Asn-153. An ATP-binding site is contributed by 173 to 174 (TD). In terms of domain architecture, PUA spans 280–358 (RGHVVIDAGA…GEIETVLGYM (79 aa)).

The protein belongs to the glutamate 5-kinase family.

The protein localises to the cytoplasm. The catalysed reaction is L-glutamate + ATP = L-glutamyl 5-phosphate + ADP. Its pathway is amino-acid biosynthesis; L-proline biosynthesis; L-glutamate 5-semialdehyde from L-glutamate: step 1/2. In terms of biological role, catalyzes the transfer of a phosphate group to glutamate to form L-glutamate 5-phosphate. The chain is Glutamate 5-kinase from Burkholderia ambifaria (strain ATCC BAA-244 / DSM 16087 / CCUG 44356 / LMG 19182 / AMMD) (Burkholderia cepacia (strain AMMD)).